We begin with the raw amino-acid sequence, 314 residues long: Porphobilinogen deaminase (314 aa).

Cys241 bears the S-(dipyrrolylmethanemethyl)cysteine mark.

Belongs to the HMBS family. As to quaternary structure, monomer. It depends on dipyrromethane as a cofactor.

The catalysed reaction is 4 porphobilinogen + H2O = hydroxymethylbilane + 4 NH4(+). The protein operates within porphyrin-containing compound metabolism; protoporphyrin-IX biosynthesis; coproporphyrinogen-III from 5-aminolevulinate: step 2/4. It participates in porphyrin-containing compound metabolism; chlorophyll biosynthesis. Its function is as follows. Tetrapolymerization of the monopyrrole PBG into the hydroxymethylbilane pre-uroporphyrinogen in several discrete steps. This is Porphobilinogen deaminase from Chloroherpeton thalassium (strain ATCC 35110 / GB-78).